A 445-amino-acid chain; its full sequence is MREILHIQGGQCGNQIGAKFWEVVCAEHGIDSTGRYGGDSELQLERINVYYNEASCGRFVPRAVLMDLEPGTMDSVRSGPYGQIFRPDNFVFGQSGAGNNWAKGHYTEGAELIDSVLDVVRKEAENCDCLQGFQVCHSLGGGTGSGMGTLLISKIREEYPDRTMLTFSVFPSPKVSDTVVEPYNATLSVHQLVENADECMVLDNEALYDICFRTLKLTTPSFGDLNHLISATMSGVTCCLRFPGQLNSDLRKLAVNLIPFPRLHFFMVGFAPLTSRGSQQYRALTVPELTQQMWDAKNMVCAADPRHGRYLTASAVFRGKMSTKEVDEQMINVQNKNSSYFVEWIPNNVKSTVCDIPPIGLKMASTFIGNSTSIQEMFRRVSEQFTAMFRRKAFLHWYTGEGMDEMEFTEAESDMNDLVSEYQQYQDATADDEEYEEEEEYEAEA.

GTP contacts are provided by Gln11, Glu69, Ser138, Gly142, Thr143, Gly144, Asn204, and Asn226. Glu69 is a Mg(2+) binding site. The interval 423–445 (QQYQDATADDEEYEEEEEYEAEA) is disordered. The segment covering 429–445 (TADDEEYEEEEEYEAEA) has biased composition (acidic residues).

It belongs to the tubulin family. As to quaternary structure, dimer of alpha and beta chains. A typical microtubule is a hollow water-filled tube with an outer diameter of 25 nm and an inner diameter of 15 nM. Alpha-beta heterodimers associate head-to-tail to form protofilaments running lengthwise along the microtubule wall with the beta-tubulin subunit facing the microtubule plus end conferring a structural polarity. Microtubules usually have 13 protofilaments but different protofilament numbers can be found in some organisms and specialized cells. Mg(2+) serves as cofactor.

It is found in the cytoplasm. The protein localises to the cytoskeleton. Functionally, tubulin is the major constituent of microtubules, a cylinder consisting of laterally associated linear protofilaments composed of alpha- and beta-tubulin heterodimers. Microtubules grow by the addition of GTP-tubulin dimers to the microtubule end, where a stabilizing cap forms. Below the cap, tubulin dimers are in GDP-bound state, owing to GTPase activity of alpha-tubulin. This Gossypium hirsutum (Upland cotton) protein is Tubulin beta-9 chain.